Here is a 346-residue protein sequence, read N- to C-terminus: Anthranilate phosphoribosyltransferase (346 aa).

Residues Gly-81, 84-85 (GD), 91-94 (NVST), 109-117 (KHGGRSVSS), and Ser-121 contribute to the 5-phospho-alpha-D-ribose 1-diphosphate site. Gly-81 lines the anthranilate pocket. Ser-93 is a Mg(2+) binding site. Arg-167 is a binding site for anthranilate. Positions 226 and 227 each coordinate Mg(2+).

It belongs to the anthranilate phosphoribosyltransferase family. As to quaternary structure, homodimer. The cofactor is Mg(2+).

It catalyses the reaction N-(5-phospho-beta-D-ribosyl)anthranilate + diphosphate = 5-phospho-alpha-D-ribose 1-diphosphate + anthranilate. The protein operates within amino-acid biosynthesis; L-tryptophan biosynthesis; L-tryptophan from chorismate: step 2/5. In terms of biological role, catalyzes the transfer of the phosphoribosyl group of 5-phosphorylribose-1-pyrophosphate (PRPP) to anthranilate to yield N-(5'-phosphoribosyl)-anthranilate (PRA). In Marinomonas sp. (strain MWYL1), this protein is Anthranilate phosphoribosyltransferase.